The primary structure comprises 159 residues: Transcription elongation factor GreA (159 aa).

Residues Thr3–Lys37 are a coiled coil.

This sequence belongs to the GreA/GreB family.

Its function is as follows. Necessary for efficient RNA polymerase transcription elongation past template-encoded arresting sites. The arresting sites in DNA have the property of trapping a certain fraction of elongating RNA polymerases that pass through, resulting in locked ternary complexes. Cleavage of the nascent transcript by cleavage factors such as GreA or GreB allows the resumption of elongation from the new 3'terminus. GreA releases sequences of 2 to 3 nucleotides. This is Transcription elongation factor GreA from Acetivibrio thermocellus (strain ATCC 27405 / DSM 1237 / JCM 9322 / NBRC 103400 / NCIMB 10682 / NRRL B-4536 / VPI 7372) (Clostridium thermocellum).